The chain runs to 84 residues: Mu-conotoxin-like Cal 12.2d (84 aa).

Positions 1-19 (MKLTCVLVVLLLVLPFGDL) are cleaved as a signal peptide. Positions 20–42 (ITTSNTEDNKRGATPWQNSLKAR) are excised as a propeptide. Tryptophan 72 is modified (6'-bromotryptophan). Proline 77 is modified (4-hydroxyproline). Tryptophan 81 bears the 6'-bromotryptophan mark.

This sequence belongs to the conotoxin O1 superfamily. In terms of processing, contains 4 disulfide bonds. Expressed by the venom duct.

The protein localises to the secreted. Mu-conotoxins block voltage-gated sodium channels. This toxin reversibly blocks voltage-gated sodium channel in cephalopods, with no alteration in the voltage dependence of sodium conductance or on the kinetics of inactivation. The chain is Mu-conotoxin-like Cal 12.2d from Californiconus californicus (California cone).